The sequence spans 649 residues: Transmembrane and coiled-coil domains protein 1 (649 aa).

Residue Met-1 is modified to N-acetylmethionine. Disordered stretches follow at residues 1-37, 58-83, 110-166, and 197-222; these read MEPSGSEQLYEDPDPGGKSQDAEARRQTESEQKLSKM, HQRRRSSVSPHDVQQIQTDPEPEVDL, RVPP…PTSS, and LAQTSSAVASSTDGSIHTESVDGIPD. Topologically, residues 1–587 are cytoplasmic; it reads MEPSGSEQLY…ARNLLGKLIN (587 aa). The span at 20–34 shows a compositional bias: basic and acidic residues; the sequence is QDAEARRQTESEQKL. Residues 64–75 show a composition bias toward polar residues; the sequence is SVSPHDVQQIQT. A compositionally biased stretch (basic residues) spans 113 to 125; sequence PKMKRGTSLHSRR. A compositionally biased stretch (low complexity) spans 156 to 166; that stretch reads SSSTTDAPTSS. The segment covering 197–214 has biased composition (polar residues); the sequence is LAQTSSAVASSTDGSIHT. The stretch at 224–310 forms a coiled coil; sequence QRTKAAIAHL…KLREVEQNGI (87 aa). Phosphoserine is present on residues Ser-378 and Ser-410. Residues 411–433 are disordered; sequence PKYGSEEDCSSATSGSVGANSTT. Positions 420 to 433 are enriched in polar residues; that stretch reads SSATSGSVGANSTT. Positions 457 to 566 form a coiled coil; the sequence is ALLHEVQEIR…KMELQQQQQQ (110 aa). 2 helical membrane passes run 588 to 608 and 621 to 641; these read ILLAVMAVLLVFVSTVANCVV and LFLVAFIAFLWKHWDALFSYV. Residues 642 to 649 are Cytoplasmic-facing; sequence DRLFSPPR.

The protein belongs to the TEX28 family. May form homodimers and heterodimers with TMCC2 or TMCC3 via the coiled-coil domains. Interacts with ribosomal proteins RPL4 and RPS6.

The protein resides in the endoplasmic reticulum membrane. Its function is as follows. Endoplasmic reticulum membrane protein that promotes endoplasmic reticulum-associated endosome fission. Localizes to contact sites between the endoplasmic reticulum and endosomes and acts by promoting recruitment of the endoplasmic reticulum to endosome tubules for fission. Endosome membrane fission of early and late endosomes is essential to separate regions destined for lysosomal degradation from carriers to be recycled to the plasma membrane. The protein is Transmembrane and coiled-coil domains protein 1 (Tmcc1) of Mus musculus (Mouse).